The sequence spans 170 residues: Probable calcium-binding protein CML27 (170 aa).

N-acetylalanine is present on alanine 2. EF-hand domains follow at residues 19-54 (ANPEELKKVFDQFDSNGDGKISVLELGGVFKAMGTS), 55-85 (YTETELNRVLEEVDTDRDGYINLDEFSTLCR), 88-123 (SSAAEIRDAFDLYDQDKNGLISASELHQVLNRLGMS), and 136-159 (VDADGDGNVNFEEFQKMMTSSSLL). Aspartate 32, asparagine 34, aspartate 36, lysine 38, glutamate 43, aspartate 68, aspartate 70, aspartate 72, tyrosine 74, glutamate 79, aspartate 101, aspartate 103, asparagine 105, glutamate 112, aspartate 137, aspartate 139, aspartate 141, asparagine 143, and glutamate 148 together coordinate Ca(2+).

In terms of biological role, potential calcium sensor. The sequence is that of Probable calcium-binding protein CML27 (CML27) from Arabidopsis thaliana (Mouse-ear cress).